Consider the following 596-residue polypeptide: Pescadillo homolog (596 aa).

In terms of domain architecture, BRCT spans 347–440 (PTSTLFSEFV…ELVPANLYLP (94 aa)). Positions 449–552 (SPWGDSVGYD…EEKDLKLIMM (104 aa)) are disordered. Residues 460–596 (AAELAEEEAE…TKAKLKKLEN (137 aa)) are a coiled coil. Acidic residues predominate over residues 463 to 500 (LAEEEAESEEEEEVSDEAEGDEEATLAAEEDEEDEAEA). Residues 501–510 (EELRAQKELE) are compositionally biased toward basic and acidic residues. Positions 519 to 529 (SEAADSAAPSK) are enriched in low complexity.

It belongs to the pescadillo family. In terms of assembly, component of the NOP7 complex, composed of ERB1, NOP7 and YTM1. The complex is held together by ERB1, which interacts with NOP7 via its N-terminal domain and with YTM1 via a high-affinity interaction between the seven-bladed beta-propeller domains of the 2 proteins. The NOP7 complex associates with the 66S pre-ribosome.

The protein localises to the nucleus. The protein resides in the nucleolus. It localises to the nucleoplasm. In terms of biological role, component of the NOP7 complex, which is required for maturation of the 25S and 5.8S ribosomal RNAs and formation of the 60S ribosome. This Eremothecium gossypii (strain ATCC 10895 / CBS 109.51 / FGSC 9923 / NRRL Y-1056) (Yeast) protein is Pescadillo homolog.